Reading from the N-terminus, the 499-residue chain is Probable alkaline/neutral invertase F (499 aa).

Serine 11 carries the post-translational modification Phosphoserine. A Phosphothreonine modification is found at threonine 20. At serine 497 the chain carries Phosphoserine.

The protein belongs to the glycosyl hydrolase 100 family.

It carries out the reaction Hydrolysis of terminal non-reducing beta-D-fructofuranoside residues in beta-D-fructofuranosides.. Its function is as follows. Invertase that cleaves sucrose into glucose and fructose. The protein is Probable alkaline/neutral invertase F of Arabidopsis thaliana (Mouse-ear cress).